The chain runs to 424 residues: Tubby protein homolog 1 (424 aa).

The interval 19 to 47 is disordered; sequence MLEDKQKQKRHQSAGSVRTTTTTSSMSMN. A compositionally biased stretch (low complexity) spans 37–47; the sequence is TTTTTSSMSMN.

The protein belongs to the TUB family. As to quaternary structure, interacts with rgb-3.

The protein resides in the cytoplasm. The protein localises to the cell projection. It localises to the axon. Its subcellular location is the dendrite. It is found in the cilium. In terms of biological role, has a role in fat regulation independent of daf-16. Implicated in ciliar sensory function which is required for normal sensory behavior such as chemotaxis. Functions in life span control via the insulin/IGF-1 pathway. Thought to be involved in neuronal trafficking. This is Tubby protein homolog 1 from Caenorhabditis briggsae.